The chain runs to 552 residues: Protein FAM234A (552 aa).

The disordered stretch occupies residues 1–40 (MMDDKDLEAEIHPLKNEDKKSQENLGNLPKTEDNLKNKPV). Topologically, residues 1-49 (MMDDKDLEAEIHPLKNEDKKSQENLGNLPKTEDNLKNKPVPSRLSRCRT) are cytoplasmic. The segment covering 8–22 (EAEIHPLKNEDKKSQ) has biased composition (basic and acidic residues). Position 21 is a phosphoserine (S21). Residues 50-70 (VAFFLSLFICLFVVFVLSFII) traverse the membrane as a helical; Signal-anchor for type II membrane protein segment. Topologically, residues 71 to 552 (PCPDRPSSED…FSRLRYRSEV (482 aa)) are extracellular. Residues N116, N119, N314, and N473 are each glycosylated (N-linked (GlcNAc...) asparagine).

It belongs to the FAM234 family.

It localises to the membrane. The sequence is that of Protein FAM234A (Fam234a) from Rattus norvegicus (Rat).